The following is a 412-amino-acid chain: Multifunctional CCA protein (412 aa).

ATP is bound by residues Gly-8 and Arg-11. CTP contacts are provided by Gly-8 and Arg-11. Asp-21 and Asp-23 together coordinate Mg(2+). Arg-91, Arg-137, and Arg-140 together coordinate ATP. CTP-binding residues include Arg-91, Arg-137, and Arg-140. The 102-residue stretch at Thr-228–Trp-329 folds into the HD domain.

Belongs to the tRNA nucleotidyltransferase/poly(A) polymerase family. Bacterial CCA-adding enzyme type 1 subfamily. As to quaternary structure, monomer. Can also form homodimers and oligomers. Mg(2+) serves as cofactor. The cofactor is Ni(2+).

It catalyses the reaction a tRNA precursor + 2 CTP + ATP = a tRNA with a 3' CCA end + 3 diphosphate. The catalysed reaction is a tRNA with a 3' CCA end + 2 CTP + ATP = a tRNA with a 3' CCACCA end + 3 diphosphate. Its function is as follows. Catalyzes the addition and repair of the essential 3'-terminal CCA sequence in tRNAs without using a nucleic acid template. Adds these three nucleotides in the order of C, C, and A to the tRNA nucleotide-73, using CTP and ATP as substrates and producing inorganic pyrophosphate. tRNA 3'-terminal CCA addition is required both for tRNA processing and repair. Also involved in tRNA surveillance by mediating tandem CCA addition to generate a CCACCA at the 3' terminus of unstable tRNAs. While stable tRNAs receive only 3'-terminal CCA, unstable tRNAs are marked with CCACCA and rapidly degraded. This is Multifunctional CCA protein from Shigella flexneri serotype 5b (strain 8401).